The sequence spans 1440 residues: Pentatricopeptide repeat-containing protein At3g18110, chloroplastic (1440 aa).

The transit peptide at methionine 1–arginine 44 directs the protein to the chloroplast. Residues threonine 63–valine 72 show a composition bias toward polar residues. Residues threonine 63–valine 84 are disordered. 25 PPR repeats span residues arginine 224–proline 258, aspartate 259–proline 295, aspartate 296–proline 330, aspartate 331–proline 365, aspartate 366–lysine 400, aspartate 401–leucine 431, aspartate 437–proline 471, threonine 472–proline 506, aspartate 507–proline 541, serine 542–leucine 572, glutamate 608–histidine 638, lysine 643–phenylalanine 678, serine 680–alanine 714, serine 715–phenylalanine 749, cysteine 751–proline 785, aspartate 786–proline 820, threonine 821–isoleucine 855, serine 856–proline 890, threonine 891–valine 925, glutamate 926–proline 960, aspartate 961–proline 995, lysine 996–leucine 1030, aspartate 1031–proline 1065, threonine 1066–leucine 1100, and threonine 1101–proline 1135. Residues lysine 1419–lysine 1440 are disordered.

This sequence belongs to the PPR family. P subfamily.

The protein resides in the plastid. It localises to the chloroplast. Its function is as follows. May play a role in embryogenesis. This is Pentatricopeptide repeat-containing protein At3g18110, chloroplastic (EMB1270) from Arabidopsis thaliana (Mouse-ear cress).